Here is a 230-residue protein sequence, read N- to C-terminus: Cytidylate kinase (230 aa).

Residue 10–18 (GPAGSGKST) participates in ATP binding.

It belongs to the cytidylate kinase family. Type 1 subfamily.

The protein resides in the cytoplasm. It catalyses the reaction CMP + ATP = CDP + ADP. The catalysed reaction is dCMP + ATP = dCDP + ADP. This chain is Cytidylate kinase, found in Leptospira borgpetersenii serovar Hardjo-bovis (strain JB197).